Consider the following 83-residue polypeptide: U5-theraphotoxin-Hs1b 2 (83 aa).

The first 21 residues, 1–21, serve as a signal peptide directing secretion; the sequence is MQTSMFLTLTGLVLLFVVCYA. Residues 22–49 constitute a propeptide that is removed on maturation; the sequence is SESEEKEFPKELLSSIFAADSDFKEEER. Disulfide bonds link C51-C63, C56-C68, and C62-C75.

It belongs to the neurotoxin 10 (Hwtx-1) family. 51 (Hntx-8) subfamily. Hntx-8 sub-subfamily. As to expression, expressed by the venom gland.

The protein resides in the secreted. Functionally, agglutinates erythrocytes. This chain is U5-theraphotoxin-Hs1b 2, found in Cyriopagopus schmidti (Chinese bird spider).